A 346-amino-acid polypeptide reads, in one-letter code: GTPase Obg (346 aa).

The Obg domain maps to 1–159 (MKFLDSAKIY…RTVLLRLKLI (159 aa)). The region spanning 160–327 (ADAGLVGLPN…ALRAVLAEID (168 aa)) is the OBG-type G domain. Residues 166 to 173 (GLPNAGKS), 191 to 195 (FTTLN), 212 to 215 (DIPG), 279 to 282 (SKVD), and 308 to 310 (SAA) contribute to the GTP site. Mg(2+) contacts are provided by Ser-173 and Thr-193.

The protein belongs to the TRAFAC class OBG-HflX-like GTPase superfamily. OBG GTPase family. As to quaternary structure, monomer. It depends on Mg(2+) as a cofactor.

It is found in the cytoplasm. Functionally, an essential GTPase which binds GTP, GDP and possibly (p)ppGpp with moderate affinity, with high nucleotide exchange rates and a fairly low GTP hydrolysis rate. Plays a role in control of the cell cycle, stress response, ribosome biogenesis and in those bacteria that undergo differentiation, in morphogenesis control. The sequence is that of GTPase Obg from Methylocella silvestris (strain DSM 15510 / CIP 108128 / LMG 27833 / NCIMB 13906 / BL2).